Consider the following 130-residue polypeptide: Cytochrome c oxidase subunit 13, mitochondrial (130 aa).

The transit peptide at 1 to 31 (MSMMNRNIGFLSRTLKTSVPKRAGLLSFRAY) directs the protein to the mitochondrion. At 32 to 61 (SNEAKVNWLEEVQAEEEHAKRSSEFWKKVT) the chain is on the mitochondrial matrix side. Residues 62 to 80 (YYIGGPALILASANAYYIY) traverse the membrane as a helical segment. Residues 81-130 (CKHQEHAKHVEDTDPGYSFENLRFKKYPWGDGSKTLFWNDKVNHLKKDDE) are Mitochondrial intermembrane-facing.

Belongs to the cytochrome c oxidase subunit 6A family. Component of the cytochrome c oxidase (complex IV, CIV), a multisubunit enzyme composed of a catalytic core of 3 subunits and several supernumerary subunits. The complex exists as a monomer or a dimer and forms supercomplexes (SCs) in the inner mitochondrial membrane with ubiquinol-cytochrome c oxidoreductase (cytochrome b-c1 complex, complex III, CIII).

It localises to the mitochondrion inner membrane. The protein operates within energy metabolism; oxidative phosphorylation. In terms of biological role, component of the cytochrome c oxidase, the last enzyme in the mitochondrial electron transport chain which drives oxidative phosphorylation. The respiratory chain contains 3 multisubunit complexes succinate dehydrogenase (complex II, CII), ubiquinol-cytochrome c oxidoreductase (cytochrome b-c1 complex, complex III, CIII) and cytochrome c oxidase (complex IV, CIV), that cooperate to transfer electrons derived from NADH and succinate to molecular oxygen, creating an electrochemical gradient over the inner membrane that drives transmembrane transport and the ATP synthase. Cytochrome c oxidase is the component of the respiratory chain that catalyzes the reduction of oxygen to water. Electrons originating from reduced cytochrome c in the intermembrane space (IMS) are transferred via the dinuclear copper A center (CU(A)) of subunit 2 and heme A of subunit 1 to the active site in subunit 1, a binuclear center (BNC) formed by heme A3 and copper B (CU(B)). The BNC reduces molecular oxygen to 2 water molecules unsing 4 electrons from cytochrome c in the IMS and 4 protons from the mitochondrial matrix. The protein is Cytochrome c oxidase subunit 13, mitochondrial (cox13) of Schizosaccharomyces pombe (strain 972 / ATCC 24843) (Fission yeast).